We begin with the raw amino-acid sequence, 367 residues long: MNIKSLLLGSAAALVAASGAQAADAIVAPEPEAVEYVRVCDAYGAGYFYIPGTETCLRVHGYVRYDVKGGDDVYTGSDRKGWDKGARFALMFNTNSETELGTLGTYTQLRFNYTSNNSRHDGQYGDFSDDRDVADGGVSTGTDLQFAYITLGGFKVGIDESEFHTFTGYLGDVINDDVVAAGSYRTGKIAYTFTGGNGFSAVIALEQGGEDVDNDYTIDGYMPHVVGGLKYAGGWGSIAGAVAYDPVIEEWATKVRGDVNITDRFSVWLQGAYSSAATPNQNYGQWGGDWAVWGGAKFIATEKVTFNLQAAHDDWGKTAVTANVAYQLVPGFTITPEVSYTKFGGEWKDTVAEDNAWGGIVRFQRSF.

An N-terminal signal peptide occupies residues 1-22 (MNIKSLLLGSAAALVAASGAQA).

The protein belongs to the alphaproteobacteria porin family. In terms of assembly, monomer.

It is found in the cell outer membrane. Its function is as follows. Forms passive diffusion pores that allow small molecular weight hydrophilic materials across the outer membrane. The protein is Porin Omp2a (omp2a) of Brucella suis.